A 530-amino-acid chain; its full sequence is Light-independent protochlorophyllide reductase subunit B (530 aa).

Position 36 (D36) interacts with [4Fe-4S] cluster. D290 functions as the Proton donor in the catalytic mechanism. 425–426 (GL) lines the substrate pocket.

The protein belongs to the ChlB/BchB/BchZ family. As to quaternary structure, protochlorophyllide reductase is composed of three subunits; ChlL, ChlN and ChlB. Forms a heterotetramer of two ChlB and two ChlN subunits. [4Fe-4S] cluster is required as a cofactor.

It carries out the reaction chlorophyllide a + oxidized 2[4Fe-4S]-[ferredoxin] + 2 ADP + 2 phosphate = protochlorophyllide a + reduced 2[4Fe-4S]-[ferredoxin] + 2 ATP + 2 H2O. It functions in the pathway porphyrin-containing compound metabolism; chlorophyll biosynthesis (light-independent). Component of the dark-operative protochlorophyllide reductase (DPOR) that uses Mg-ATP and reduced ferredoxin to reduce ring D of protochlorophyllide (Pchlide) to form chlorophyllide a (Chlide). This reaction is light-independent. The NB-protein (ChlN-ChlB) is the catalytic component of the complex. In Synechococcus sp. (strain WH7803), this protein is Light-independent protochlorophyllide reductase subunit B.